Consider the following 417-residue polypeptide: CinA-like protein (417 aa).

Belongs to the CinA family.

This chain is CinA-like protein, found in Gloeothece citriformis (strain PCC 7424) (Cyanothece sp. (strain PCC 7424)).